A 170-amino-acid chain; its full sequence is MSSLRIPIALQQAVMRCLRHKLQLANQHLGTDYPEPKINYHQRGTSAGSAYLQSFEIRLNPVLLLENQQPFIDEVVPHELAHLLVYRQFGRVPPHGKEWRWMMEHVLQVPASRTHQFAVTSVRSKTFNYQCKCQQHALTIRRHNKVQRGESEYRCRECGEKLQFVAKKTC.

Positions glutamine 23–valine 165 constitute a SprT-like domain. Zn(2+) is bound at residue histidine 78. Glutamate 79 is an active-site residue. Residue histidine 82 participates in Zn(2+) binding.

It belongs to the SprT family. It depends on Zn(2+) as a cofactor.

It is found in the cytoplasm. This is Protein SprT from Yersinia enterocolitica serotype O:8 / biotype 1B (strain NCTC 13174 / 8081).